Here is a 124-residue protein sequence, read N- to C-terminus: Small ribosomal subunit protein uS12 (124 aa).

The tract at residues 1 to 25 (MPTFNQLVRNGRKPPRWKTSSPALE) is disordered. At aspartate 89 the chain carries 3-methylthioaspartic acid. Residues 104-124 (TAGVANRKQSRSKYGAKRPKS) form a disordered region. Over residues 111 to 124 (KQSRSKYGAKRPKS) the composition is skewed to basic residues.

It belongs to the universal ribosomal protein uS12 family. Part of the 30S ribosomal subunit. Contacts proteins S8 and S17. May interact with IF1 in the 30S initiation complex.

In terms of biological role, with S4 and S5 plays an important role in translational accuracy. Functionally, interacts with and stabilizes bases of the 16S rRNA that are involved in tRNA selection in the A site and with the mRNA backbone. Located at the interface of the 30S and 50S subunits, it traverses the body of the 30S subunit contacting proteins on the other side and probably holding the rRNA structure together. The combined cluster of proteins S8, S12 and S17 appears to hold together the shoulder and platform of the 30S subunit. This Solibacter usitatus (strain Ellin6076) protein is Small ribosomal subunit protein uS12.